The chain runs to 378 residues: Aminotransferase apf4 (378 aa).

Arginine 88 lines the pyridoxal 5'-phosphate pocket. Lysine 189 carries the N6-(pyridoxal phosphate)lysine modification. Residue glutamate 228 participates in pyridoxal 5'-phosphate binding. Positions glutamate 359 to glutamate 378 are disordered.

The protein belongs to the class-IV pyridoxal-phosphate-dependent aminotransferase family. Pyridoxal 5'-phosphate serves as cofactor.

The protein operates within secondary metabolite biosynthesis. Functionally, aminotransferase; part of the gene cluster that mediates the biosynthesis of the cyclic tetrapeptide apicidin F (APF). The non-ribosomal peptide synthetase apf1 incorporates four different amino acids to produce apicidin F: L-phenylalanine, D-pipecolic acid (D-pip), N-methoxy-L-tryptophan and L-2-aminooctanedioic acid. L-Phenylalanine is the only proteinogenic amino acid directly used by apf1. The 3 other apf1 substrates are non-proteinogenic and have to be modified by other enzymes of the cluster. Lysine is converted to delta-1-pyrroline-5-carboxylate (P5C) which is reduced to L-pipecolic acid (L-pip) by apf3. L-pip is epimerized to D-pip, probably by apf1 activity, prior to incorporation. L-Tryptophan is N-oxidyzed by one of the cytochrome P450 monooxygenases (apf7 or apf8), and further methylated at the hydroxy group by the O-methyltransferase apf6 to yield N-methoxy-L-tryptophan. The synthesis of the fourth apf1 substrate is more complex. The fatty acid synthase apf5 is involved in the synthesis of the octanoic acid backbone of L-2-aminooctanedioic acid by fixing one acetyl-CoA unit and three malonyl-CoA units. Then one of the cytochrome P450 monooxygenases (apf7 or apf8) may oxidize this backbone to 2-oxooctanoic acid. The aminotransferase apf4 is predicted to catalyze the exchange of the keto group with an amino group. The next step would be the oxidation of 2-aminooctanoic acid by one of the cytochrome P450 monooxygenases (apf7 or apf8). The last step is the oxidation of 2-amino-8-hydroxyoctanoic acid to 2-aminooctanedioic acid is catalyzed by the FAD-dependent monooxygenase apf9. In Gibberella fujikuroi (strain CBS 195.34 / IMI 58289 / NRRL A-6831) (Bakanae and foot rot disease fungus), this protein is Aminotransferase apf4.